A 122-amino-acid polypeptide reads, in one-letter code: Glycine cleavage system H protein (122 aa).

A Lipoyl-binding domain is found at threonine 19–lysine 101. Lysine 60 bears the N6-lipoyllysine mark.

This sequence belongs to the GcvH family. The glycine cleavage system is composed of four proteins: P, T, L and H. It depends on (R)-lipoate as a cofactor.

In terms of biological role, the glycine cleavage system catalyzes the degradation of glycine. The H protein shuttles the methylamine group of glycine from the P protein to the T protein. The sequence is that of Glycine cleavage system H protein from Dinoroseobacter shibae (strain DSM 16493 / NCIMB 14021 / DFL 12).